We begin with the raw amino-acid sequence, 269 residues long: Imidazole glycerol phosphate synthase subunit HisF (269 aa).

Active-site residues include D23 and D142.

This sequence belongs to the HisA/HisF family. As to quaternary structure, heterodimer of HisH and HisF.

Its subcellular location is the cytoplasm. It catalyses the reaction 5-[(5-phospho-1-deoxy-D-ribulos-1-ylimino)methylamino]-1-(5-phospho-beta-D-ribosyl)imidazole-4-carboxamide + L-glutamine = D-erythro-1-(imidazol-4-yl)glycerol 3-phosphate + 5-amino-1-(5-phospho-beta-D-ribosyl)imidazole-4-carboxamide + L-glutamate + H(+). It participates in amino-acid biosynthesis; L-histidine biosynthesis; L-histidine from 5-phospho-alpha-D-ribose 1-diphosphate: step 5/9. In terms of biological role, IGPS catalyzes the conversion of PRFAR and glutamine to IGP, AICAR and glutamate. The HisF subunit catalyzes the cyclization activity that produces IGP and AICAR from PRFAR using the ammonia provided by the HisH subunit. This chain is Imidazole glycerol phosphate synthase subunit HisF, found in Bordetella pertussis (strain Tohama I / ATCC BAA-589 / NCTC 13251).